A 132-amino-acid polypeptide reads, in one-letter code: MRAFLEEFKNFISRGNALDLAVGVVIGGAFGKIVTSFVADLFTPVLGLMIGGVNFQHLAWEIGGSPEDPVTINYGSFLQAVFDFVIIAFAIFLLVKAINTLQRKEEESPPTLPPPEVVLLTEIRDILNRHSQ.

A run of 2 helical transmembrane segments spans residues 11 to 31 and 75 to 95; these read FISRGNALDLAVGVVIGGAFG and GSFLQAVFDFVIIAFAIFLLV.

It belongs to the MscL family. In terms of assembly, homopentamer.

It localises to the cell inner membrane. Channel that opens in response to stretch forces in the membrane lipid bilayer. May participate in the regulation of osmotic pressure changes within the cell. This Synechococcus sp. (strain JA-2-3B'a(2-13)) (Cyanobacteria bacterium Yellowstone B-Prime) protein is Large-conductance mechanosensitive channel.